We begin with the raw amino-acid sequence, 323 residues long: Phosphomevalonate kinase (323 aa).

The protein belongs to the GHMP kinase family. As to quaternary structure, homodimer. It depends on Mg(2+) as a cofactor.

It carries out the reaction (R)-5-phosphomevalonate + ATP = (R)-5-diphosphomevalonate + ADP. Its pathway is isoprenoid biosynthesis; isopentenyl diphosphate biosynthesis via mevalonate pathway; isopentenyl diphosphate from (R)-mevalonate: step 2/3. Catalyzes the phosphorylation of (R)-mevalonate 5-phosphate (MVAP) to (R)-mevalonate 5-diphosphate (MVAPP). Functions in the mevalonate (MVA) pathway leading to isopentenyl diphosphate (IPP), a key precursor for the biosynthesis of isoprenoid compounds such as archaeal membrane lipids. This Saccharolobus solfataricus (strain ATCC 35092 / DSM 1617 / JCM 11322 / P2) (Sulfolobus solfataricus) protein is Phosphomevalonate kinase.